A 152-amino-acid polypeptide reads, in one-letter code: Superoxide dismutase [Cu-Zn] (152 aa).

Position 2 is an N-acetylserine (serine 2). Cu cation-binding residues include histidine 44, histidine 46, and histidine 61. Cysteine 55 and cysteine 144 form a disulfide bridge. Zn(2+)-binding residues include histidine 61, histidine 69, histidine 78, and aspartate 81. Histidine 118 is a binding site for Cu cation.

Belongs to the Cu-Zn superoxide dismutase family. Monomer. Requires Cu cation as cofactor. Zn(2+) serves as cofactor.

It is found in the cytoplasm. It carries out the reaction 2 superoxide + 2 H(+) = H2O2 + O2. Its activity is regulated as follows. Inhibited by KCN and diethyldithiocarbamate. Its function is as follows. Destroys radicals which are normally produced within the cells and which are toxic to biological systems. The plasma superoxide dismutase has phagocytosis-stimulating activity and may play an important role in the biological defenses of the organism. The chain is Superoxide dismutase [Cu-Zn] from Halocynthia roretzi (Sea squirt).